The following is a 1693-amino-acid chain: Latrophilin Cirl (1693 aa).

Over 1–774 the chain is Extracellular; the sequence is MVLQGAKQRL…LFTMFDGNMR (774 aa). An SUEL-type lectin domain is found at 30 to 119; sequence ACEGKKLTIE…KYLEAHYQCV (90 aa). Residues N147, N260, N306, and N345 are each glycosylated (N-linked (GlcNAc...) asparagine). The disordered stretch occupies residues 190 to 309; the sequence is PPATHATPPG…GPSVSSNGSA (120 aa). 2 stretches are compositionally biased toward polar residues: residues 259–269 and 287–309; these read SNATAPSNTRI and KSSPNRTPGTAASGPSVSSNGSA. The segment at 379–406 is disordered; that stretch reads SFDEDDEEMAGTSTTTPMSTSGDCLHNS. The span at 390 to 399 shows a compositional bias: low complexity; it reads TSTTTPMSTS. Residues N405, N662, N710, and N737 are each glycosylated (N-linked (GlcNAc...) asparagine). Residues 568-761 enclose the GAIN-B domain; that stretch reads RSVVQKVKNI…AILMDVVDEH (194 aa). Disulfide bonds link C716–C743 and C731–C745. Residues 716-761 form a GPS region; that stretch reads CVFWNYIDHAWSANGCSLESTNRTHSVCSCNHLTNFAILMDVVDEH. The chain crosses the membrane as a helical span at residues 775–795; it reads IFIYISIAICVVFIVIALLTL. The Cytoplasmic portion of the chain corresponds to 796–808; the sequence is KLFNGVFVKSART. Residues 809-829 form a helical membrane-spanning segment; sequence SIYINIYICLLAIELLFLLGI. Residues 830–835 are Extracellular-facing; the sequence is EQTETS. A helical membrane pass occupies residues 836–856; that stretch reads IFCGFITVFLHCAILSGTSWF. The Cytoplasmic segment spans residues 857 to 882; that stretch reads CYEAFHSYSTLTSDELLLEVDQTPKV. The helical transmembrane segment at 883–903 threads the bilayer; sequence NCYYLLSYGLSLSVVAISLVI. The Extracellular portion of the chain corresponds to 904–927; the sequence is NPSTYTQNDYCVLMEANAVFYATF. The chain crosses the membrane as a helical span at residues 928–948; the sequence is VAPVLIFFMAAIGYTFLSWII. The Cytoplasmic portion of the chain corresponds to 949–975; it reads MCRKSRTGLKTKEHTRLATVRFDIRCS. The helical transmembrane segment at 976 to 996 threads the bilayer; it reads FVFFLLLSAVWCSAYFYLRGA. Residues 997 to 1003 lie on the Extracellular side of the membrane; the sequence is KMDEDVT. The chain crosses the membrane as a helical span at residues 1004–1024; sequence GIYGYNFICFNTLLGLYIFVF. The Cytoplasmic portion of the chain corresponds to 1025–1693; sequence HCIQNEKIRR…VRCYLEPLAK (669 aa). A disordered region spans residues 1089 to 1109; sequence PLGTNDDAHDEQQQQQHMSAT. Residues S1165, S1256, and S1263 each carry the phosphoserine modification. Disordered stretches follow at residues 1237–1264, 1279–1362, 1450–1529, and 1596–1678; these read KPNSQHGKKKRGGVGAIPASPSGSLHSR, KTKP…APPP, SRYG…LPPQ, and SMRG…SAML. Residues 1307-1323 show a composition bias toward low complexity; the sequence is QQQQQLRQQRQQQQQQL. Residues S1324 and S1325 each carry the phosphoserine modification. Residues 1337–1357 are compositionally biased toward low complexity; the sequence is LHLQHQQQQQQQRRAGGQQQL. A compositionally biased stretch (polar residues) spans 1464-1475; sequence RNQQQQQHSLAQ. Composition is skewed to acidic residues over residues 1485 to 1498 and 1508 to 1521; these read DEDDDEDEDDEETT and CDEEEEDEESDMED. The segment covering 1640-1663 has biased composition (low complexity); it reads QQLQKLSPQSTTSSSSHTSHSNPH.

It belongs to the G-protein coupled receptor 2 family. LN-TM7 subfamily. In terms of assembly, forms a heterodimer, consisting of a large extracellular region non-covalently linked to a seven-transmembrane moiety. Proteolytically cleaved into 2 subunits, an extracellular subunit and a seven-transmembrane subunit.

It localises to the cell membrane. The sequence is that of Latrophilin Cirl from Drosophila pseudoobscura pseudoobscura (Fruit fly).